A 568-amino-acid polypeptide reads, in one-letter code: Proton-coupled zinc antiporter SLC30A9, mitochondrial (568 aa).

Residues 1-67 (MLPGLAAAAA…IGTLSQVKLY (67 aa)) constitute a mitochondrion transit peptide. Transmembrane regions (helical) follow at residues 239-259 (VVMVAICINGLNCFFKFLAWI), 314-334 (GVGIFMMGAGLSWYHGVMGLL), 342-362 (LLWAYCILAGSLVSEGATLLV), 392-412 (VILLEDTAAVLGVIIAATCMG), and 424-444 (SLGSLGVGTLLGMVSAFLIYT). The LXXLL motif motif lies at 462-466 (LTELL).

It belongs to the cation diffusion facilitator (CDF) transporter (TC 2.A.4) family. SLC30A subfamily. As to quaternary structure, interacts with GRIP1, ESR1 and AR. Ubiquitously expressed in fetal and adult tissues and cancer cell lines.

The protein localises to the mitochondrion membrane. Its subcellular location is the nucleus. The protein resides in the endoplasmic reticulum. The enzyme catalyses Zn(2+)(in) + 2 H(+)(out) = Zn(2+)(out) + 2 H(+)(in). Mitochondrial proton-coupled zinc ion antiporter mediating the export of zinc from the mitochondria and involved in zinc homeostasis, zinc mobilization as well as mitochondrial morphology and health. In nucleus, functions as a secondary coactivator for nuclear receptors by cooperating with p160 coactivators subtypes. Plays a role in transcriptional activation of Wnt-responsive genes. This is Proton-coupled zinc antiporter SLC30A9, mitochondrial from Homo sapiens (Human).